Reading from the N-terminus, the 303-residue chain is Recombination-associated protein RdgC (303 aa).

The protein belongs to the RdgC family.

The protein localises to the cytoplasm. It is found in the nucleoid. May be involved in recombination. The polypeptide is Recombination-associated protein RdgC (Yersinia enterocolitica serotype O:8 / biotype 1B (strain NCTC 13174 / 8081)).